The primary structure comprises 152 residues: Endoribonuclease YbeY (152 aa).

Residues His-113, His-117, and His-123 each contribute to the Zn(2+) site.

Belongs to the endoribonuclease YbeY family. Zn(2+) serves as cofactor.

The protein resides in the cytoplasm. Functionally, single strand-specific metallo-endoribonuclease involved in late-stage 70S ribosome quality control and in maturation of the 3' terminus of the 16S rRNA. The polypeptide is Endoribonuclease YbeY (Wolbachia pipientis subsp. Culex pipiens (strain wPip)).